A 160-amino-acid chain; its full sequence is Allophycocyanin alpha chain (160 aa).

Asn70 is subject to N4-methylasparagine. Cys80 is a binding site for (2R,3E)-phycocyanobilin.

Belongs to the phycobiliprotein family. In terms of assembly, component of the phycobilisome. Heterodimer of an alpha and a beta chain. Contains one covalently linked phycocyanobilin chromophore.

The protein localises to the cellular thylakoid membrane. In terms of biological role, light-harvesting photosynthetic bile pigment-protein from the phycobiliprotein complex. Allophycocyanin has a maximum absorption at approximately 650 nanometers. This is Allophycocyanin alpha chain (apcA) from Anabaena cylindrica.